Here is a 183-residue protein sequence, read N- to C-terminus: Ribosome-recycling factor (183 aa).

The protein belongs to the RRF family.

Its subcellular location is the cytoplasm. Functionally, responsible for the release of ribosomes from messenger RNA at the termination of protein biosynthesis. May increase the efficiency of translation by recycling ribosomes from one round of translation to another. In Ureaplasma urealyticum serovar 10 (strain ATCC 33699 / Western), this protein is Ribosome-recycling factor.